The sequence spans 823 residues: MKLFGFGSRRGQTAQGSIDHVYTGSGYRIRDSELQKIHRAAVKGDAAEVERCLARRSGDLDALDKQHRTALHLACASGHVQVVTLLVNRKCQIDVCDKENRTPLIQAVHCQEEACAVILLEHGANPNLKDIYGNTALHYAVYSESTSLAEKLLSHGAHIEALDKDNNTPLLFAIICKKEKMVEFLLKRKASSHAVDRLRRSALMLAVYYDSPGIVNILLKQNIDVFAQDMCGRDAEDYAISHHLTKIQQQILEHKKKILKKEKSDVGSSDESAVSIFHELRVDSLPASDDKDLNVATKQCVPEKVSEPLPGSSHEKGNRIVNGQGEGPPAKHPSLKPSTEVEDPAVKGAVQRKNVQTLRAEQALPVASEEEQERHERSEKKQPQVKEGNNTNKSEKIQLSENICDSTSSAAAGRLTQQRKIGKTYPQQFPKKLKEEHDRCTLKQENEEKTNVNMLYKKNREELERKEKQYKKEVEAKQLEPTVQSLEMKSKTARNTPNRDFHNHEEMKGLMDENCILKADIAILRQEICTMKNDNLEKENKYLKDIKIVKETNAALEKYIKLNEEMITETAFRYQQELNYLKAENTRLNAELLKEKESKKRLEADIESYQSRLAAAISKHSESVKTERNLKLALERTRDVSVQVEMSSAISKVKDENEFLTEQLSETQIKFNALKDKFRKTRDSLRKKSLALETVQNDLSQTQQQTQEMKEMYQNAEAKVNNSTGKWNCVEERICHLQRENAWLVQQLDDVHQKEDHKEIVTNIQRGFIESGKKDLVLEEKSKKLMNECDHLKESLFQYEREKTEGVVSIKEDKYFQTSRKTI.

5 ANK repeats span residues 66-95 (QHRT…QIDV), 99-128 (ENRT…NPNL), 132-161 (YGNT…HIEA), 165-194 (DNNT…SSHA), and 198-227 (LRRS…DVFA). Disordered regions lie at residues 301 to 343 (VPEK…EVED) and 355 to 402 (VQTL…LSEN). Positions 372–384 (QERHERSEKKQPQ) are enriched in basic and acidic residues. 3 coiled-coil regions span residues 431–480 (KKLK…KQLE), 571–724 (AFRY…NNST), and 776–805 (LVLE…EKTE).

This is Putative ankyrin repeat domain-containing protein 20A3 from Homo sapiens (Human).